The primary structure comprises 73 residues: Putative sulfur carrier protein AF_0556 (73 aa).

C11 functions as the Cysteine persulfide intermediate in the catalytic mechanism.

It belongs to the sulfur carrier protein TusA family.

The polypeptide is Putative sulfur carrier protein AF_0556 (Archaeoglobus fulgidus (strain ATCC 49558 / DSM 4304 / JCM 9628 / NBRC 100126 / VC-16)).